The chain runs to 506 residues: Histidine ammonia-lyase (506 aa).

The 5-imidazolinone (Ala-Gly) cross-link spans 144-146; sequence ASG. Residue S145 is modified to 2,3-didehydroalanine (Ser).

It belongs to the PAL/histidase family. Post-translationally, contains an active site 4-methylidene-imidazol-5-one (MIO), which is formed autocatalytically by cyclization and dehydration of residues Ala-Ser-Gly.

The protein resides in the cytoplasm. The enzyme catalyses L-histidine = trans-urocanate + NH4(+). It functions in the pathway amino-acid degradation; L-histidine degradation into L-glutamate; N-formimidoyl-L-glutamate from L-histidine: step 1/3. The polypeptide is Histidine ammonia-lyase (Legionella pneumophila subsp. pneumophila (strain Philadelphia 1 / ATCC 33152 / DSM 7513)).